A 424-amino-acid polypeptide reads, in one-letter code: Catabolic NAD-specific glutamate dehydrogenase RocG (424 aa).

Substrate contacts are provided by lysine 80 and lysine 104. Lysine 116 acts as the Proton donor in catalysis. The NAD(+) site is built by threonine 200 and asparagine 231. Substrate is bound at residue serine 358.

Belongs to the Glu/Leu/Phe/Val dehydrogenases family. As to quaternary structure, homohexamer. Interacts with transcriptional regulator GltC.

It catalyses the reaction L-glutamate + NAD(+) + H2O = 2-oxoglutarate + NH4(+) + NADH + H(+). Functionally, devoted to catabolic function of glutamate (and other amino acids of the glutamate family) utilization as sole nitrogen source. It is not involved in anabolic function of glutamate biosynthesis since B.subtilis possesses only one route of glutamate biosynthesis from ammonia, catalyzed by glutamate synthase. Wild-type cells are unable to utilize glutamate or glutamine as a sole carbon source; thus RocG does not function physiologically to synthesize glutamate, but it is involved in the utilization of arginine, and proline as carbon or nitrogen source. The catabolic RocG is essential for controlling gltAB expression via an inhibitory interactions with the transcriptional regulator GltC in response to the availability of sugars. This chain is Catabolic NAD-specific glutamate dehydrogenase RocG, found in Bacillus subtilis (strain 168).